The primary structure comprises 309 residues: Homoserine O-succinyltransferase (309 aa).

Cys-142 functions as the Acyl-thioester intermediate in the catalytic mechanism. Substrate-binding residues include Lys-163 and Ser-192. The active-site Proton acceptor is His-235. Residue Glu-237 is part of the active site. A substrate-binding site is contributed by Arg-249.

It belongs to the MetA family. Homodimer.

It localises to the cytoplasm. The enzyme catalyses L-homoserine + succinyl-CoA = O-succinyl-L-homoserine + CoA. It participates in amino-acid biosynthesis; L-methionine biosynthesis via de novo pathway; O-succinyl-L-homoserine from L-homoserine: step 1/1. In terms of biological role, transfers a succinyl group from succinyl-CoA to L-homoserine, forming succinyl-L-homoserine. This is Homoserine O-succinyltransferase from Shigella sonnei (strain Ss046).